The chain runs to 687 residues: Immune inhibitor A (687 aa).

Positions 1–12 (MKDAKADTKEKL) are enriched in basic and acidic residues. The or 32 signal peptide spans 1–25 (MKDAKADTKEKLNQPATGTPAATGP). The tract at residues 1–43 (MKDAKADTKEKLNQPATGTPAATGPVKGGLNGKVPTSPAKQKA) is disordered. A propeptide spanning residues 26–40 (VKGGLNGKVPTSPAK) is cleaved from the precursor. Histidine 266 lines the Zn(2+) pocket. The active site involves glutamate 267. Histidine 270 contributes to the Zn(2+) binding site.

Belongs to the peptidase M6 family. The cofactor is Zn(2+). Ca(2+) is required as a cofactor.

The protein localises to the secreted. Neutral metalloprotease that is secreted to degrade antibacterial proteins produced by the insect host for its defense (attacins and cecropins). Probably degrades some unknown crucial protein(s) too, since it is toxic when injected to insect larvae. This is Immune inhibitor A (ina) from Bacillus thuringiensis subsp. alesti.